The sequence spans 442 residues: Signal recognition particle 54 kDa protein (442 aa).

GTP contacts are provided by residues 106 to 113, 186 to 190, and 244 to 247; these read GLQGSGKT, DTAGR, and TKLD.

Belongs to the GTP-binding SRP family. SRP54 subfamily. As to quaternary structure, part of the signal recognition particle protein translocation system, which is composed of SRP and FtsY. Archaeal SRP consists of a 7S RNA molecule of 300 nucleotides and two protein subunits: SRP54 and SRP19.

It localises to the cytoplasm. The catalysed reaction is GTP + H2O = GDP + phosphate + H(+). In terms of biological role, involved in targeting and insertion of nascent membrane proteins into the cytoplasmic membrane. Binds to the hydrophobic signal sequence of the ribosome-nascent chain (RNC) as it emerges from the ribosomes. The SRP-RNC complex is then targeted to the cytoplasmic membrane where it interacts with the SRP receptor FtsY. The protein is Signal recognition particle 54 kDa protein of Methanothermobacter thermautotrophicus (strain ATCC 29096 / DSM 1053 / JCM 10044 / NBRC 100330 / Delta H) (Methanobacterium thermoautotrophicum).